A 283-amino-acid polypeptide reads, in one-letter code: Cyclin-C (283 aa).

Residues 46–144 (NVIQALGEHL…VLECEFYLLE (99 aa)) form the Cyclin N-terminal domain. The disordered stretch occupies residues 252 to 283 (TILSKMPKPKPPPNSEGEQGPNGSQNSSYSQS). Over residues 272–283 (PNGSQNSSYSQS) the composition is skewed to polar residues. The residue at position 275 (S275) is a Phosphoserine.

It belongs to the cyclin family. Cyclin C subfamily. As to quaternary structure, component of the Mediator complex, which is composed of MED1, MED4, MED6, MED7, MED8, MED9, MED10, MED11, MED12, MED13, MED13L, MED14, MED15, MED16, MED17, MED18, MED19, MED20, MED21, MED22, MED23, MED24, MED25, MED26, MED27, MED29, MED30, MED31, CCNC, CDK8 and CDC2L6/CDK11. The MED12, MED13, CCNC and CDK8 subunits form a distinct module termed the CDK8 module. Mediator containing the CDK8 module is less active than Mediator lacking this module in supporting transcriptional activation. Individual preparations of the Mediator complex lacking one or more distinct subunits have been variously termed ARC, CRSP, DRIP, PC2, SMCC and TRAP. The cylin/CDK pair formed by CCNC/CDK8 also associates with the large subunit of RNA polymerase II.

Its subcellular location is the nucleus. Functionally, component of the Mediator complex, a coactivator involved in regulated gene transcription of nearly all RNA polymerase II-dependent genes. Mediator functions as a bridge to convey information from gene-specific regulatory proteins to the basal RNA polymerase II transcription machinery. Mediator is recruited to promoters by direct interactions with regulatory proteins and serves as a scaffold for the assembly of a functional preinitiation complex with RNA polymerase II and the general transcription factors. Binds to and activates cyclin-dependent kinase CDK8 that phosphorylates the CTD (C-terminal domain) of the large subunit of RNA polymerase II (RNAp II), which may inhibit the formation of a transcription initiation complex. This is Cyclin-C (CCNC) from Bos taurus (Bovine).